The sequence spans 506 residues: Maturase K (506 aa).

Belongs to the intron maturase 2 family. MatK subfamily.

It localises to the plastid. The protein localises to the chloroplast. Functionally, usually encoded in the trnK tRNA gene intron. Probably assists in splicing its own and other chloroplast group II introns. This is Maturase K from Pisum sativum (Garden pea).